The sequence spans 650 residues: PTS system mannose-specific EIIBCA component (650 aa).

A PTS EIIB type-2 domain is found at 1–98 (MKLLAITSCP…PEELIQKALN (98 aa)). C9 serves as the catalytic Phosphocysteine intermediate; for EIIB activity. One can recognise a PTS EIIC type-2 domain in the interval 123–456 (IYRHLMNGVS…SLVTALFVNV (334 aa)). 7 helical membrane passes run 133-153 (FMVPFIVVGGLLIAVALTLGG), 174-194 (IGSASFSFMIPILAGYIAYSI), 199-219 (GLVPGMIGGYIAATGSFYDSA), 221-241 (GAGFLGGIIAGFLAGYAALWI), 256-276 (IIIIPVFASLIVGLAFVFLIG), 297-317 (SSILLALILGAMISFDMGGPV), and 336-356 (IMGPIAVAICIPPIGLGIATF). The residue at position 365 (S365) is a Phosphoserine. 3 consecutive transmembrane segments (helical) span residues 369–389 (MGKAAFTMGLFGITEGAIPFA), 396–416 (VIPSIMAGSMTGSVIAMIGNV), and 436–456 (VLMFFIAVIAGSLVTALFVNV). The region spanning 504–649 (DIISPELIEP…EEAYKLLEEI (146 aa)) is the PTS EIIA type-2 domain. Catalysis depends on H566, which acts as the Tele-phosphohistidine intermediate; for EIIA activity.

It is found in the cell membrane. It carries out the reaction D-mannose(out) + N(pros)-phospho-L-histidyl-[protein] = D-mannose 6-phosphate(in) + L-histidyl-[protein]. Functionally, the phosphoenolpyruvate-dependent sugar phosphotransferase system (sugar PTS), a major carbohydrate active -transport system, catalyzes the phosphorylation of incoming sugar substrates concomitantly with their translocation across the cell membrane. This system is involved in mannose transport. The sequence is that of PTS system mannose-specific EIIBCA component (manP) from Bacillus subtilis (strain 168).